Consider the following 401-residue polypeptide: Phosrestin-1 (401 aa).

Phosphoserine; by CaMK is present on Ser366.

Belongs to the arrestin family. Phosphorylated upon light exposure. In terms of tissue distribution, expressed in photoreceptor cells.

The protein resides in the cell projection. It localises to the rhabdomere. Regulates photoreceptor cell deactivation. Arr1 and Arr2 proteins are mediators of rhodopsin inactivation and are essential for the termination of the phototransduction cascade. Involved in regulating normal cycles of per nuclear accumulation in brain circadian neurons and thus is important for normal circadian behavior. In the dark, functions with Arr1 to promote the formation of cytosolic Bdbt foci, which are required for dco localization to photoreceptor nuclei where it phosphorylates and activates degradation of per. The protein is Phosrestin-1 (Arr2) of Drosophila melanogaster (Fruit fly).